We begin with the raw amino-acid sequence, 207 residues long: uncharacterized protein (207 aa).

This is an uncharacterized protein from Haemophilus influenzae (strain ATCC 51907 / DSM 11121 / KW20 / Rd).